The chain runs to 488 residues: Histamine H1 receptor (488 aa).

Over 1–38 (MSFLPGMTPVTLSNFSWALEDRMLEGNSTTTPTRQLMP) the chain is Extracellular. Residues N14 and N27 are each glycosylated (N-linked (GlcNAc...) asparagine). The helical transmembrane segment at 39-59 (LVVVLSSVSLVTVALNLLVLY) threads the bilayer. The Cytoplasmic portion of the chain corresponds to 60-73 (AVRSERKLHTVGNL). A helical transmembrane segment spans residues 74 to 98 (YIVSLSVADLIVGAVVMPMSILYLH). At 99–106 (RSAWILGR) the chain is on the extracellular side. The helical transmembrane segment at 107 to 132 (PLCLFWLSMDYVASTASIFSVFILCI) threads the bilayer. Residues C109 and C189 are joined by a disulfide bond. The histamine site is built by D116 and T121. The tract at residues 116–121 (DYVAST) is important for agonist binding. Residues 133–153 (DRYRSVQQPLRYLRYRTKTRA) lie on the Cytoplasmic side of the membrane. 2 positions are modified to phosphothreonine: T149 and T151. Residues 154 to 173 (SATILGAWLLSFLWVIPILG) traverse the membrane as a helical segment. Residues 174–197 (WHHFMAPTSEPREKKCETDFYDVT) lie on the Extracellular side of the membrane. The chain crosses the membrane as a helical span at residues 198–220 (WFKVMTAIINFYLPTLLMLWFYI). N207 serves as a coordination point for histamine. At 221-417 (RIYKAVRRHC…LNRERKAAKQ (197 aa)) the chain is on the cytoplasmic side. At S239 the chain carries Phosphoserine. Positions 259–274 (RMGKESPWEDPKRCSK) are enriched in basic and acidic residues. Residues 259-285 (RMGKESPWEDPKRCSKDASGVHTPMPS) are disordered. Phosphoserine is present on residues S345, S381, S383, S397, and S399. The chain crosses the membrane as a helical span at residues 418–441 (LGCIMAAFILCWIPYFVFFMVIAF). Residues 425 to 429 (FILCW) form an important for agonist binding region. Y432 provides a ligand contact to histamine. A disulfide bond links C442 and C445. The Extracellular segment spans residues 442–447 (CKSCSN). The chain crosses the membrane as a helical span at residues 448-470 (EPVHMFTIWLGYLNSTLNPLIYP). Over 471–488 (LCNENFRKTFKRILRIPP) the chain is Cytoplasmic.

Belongs to the G-protein coupled receptor 1 family. In terms of processing, phosphorylation at sites in the second and third cytoplasmic loops independently contribute to agonist-induced receptor down-regulation.

The protein localises to the cell membrane. Functionally, G-protein-coupled receptor for histamine, a biogenic amine that functions as an immune modulator and a neurotransmitter. Through the H1 receptor, histamine mediates the contraction of smooth muscles and increases capillary permeability due to contraction of terminal venules. Also mediates neurotransmission in the central nervous system and thereby regulates circadian rhythms, emotional and locomotor activities as well as cognitive functions. The chain is Histamine H1 receptor from Cavia porcellus (Guinea pig).